The primary structure comprises 608 residues: Threonine--tRNA ligase (608 aa).

An editing domain region spans residues 1–143 (MRVLYIHAER…VFKPEEAKTE (143 aa)). Catalytic stretches follow at residues 194-490 (PKYL…PRLP) and 195-490 (KYLD…PRLP). Residues Cys287, His338, and His459 each contribute to the Zn(2+) site.

Belongs to the class-II aminoacyl-tRNA synthetase family. In terms of assembly, homodimer. The cofactor is Zn(2+).

It is found in the cytoplasm. It catalyses the reaction tRNA(Thr) + L-threonine + ATP = L-threonyl-tRNA(Thr) + AMP + diphosphate + H(+). Functionally, catalyzes the attachment of threonine to tRNA(Thr) in a two-step reaction: L-threonine is first activated by ATP to form Thr-AMP and then transferred to the acceptor end of tRNA(Thr). Also edits incorrectly charged L-seryl-tRNA(Thr). The protein is Threonine--tRNA ligase of Pyrobaculum arsenaticum (strain DSM 13514 / JCM 11321 / PZ6).